The chain runs to 163 residues: Putative protein CASTOR3P (163 aa).

Belongs to the GATS family.

The polypeptide is Putative protein CASTOR3P (Homo sapiens (Human)).